Consider the following 238-residue polypeptide: Arginine ABC transporter permease protein ArtQ (238 aa).

Residues Met-1–Thr-14 lie on the Periplasmic side of the membrane. An ABC transmembrane type-1 domain is found at Ala-11–Leu-223. A helical transmembrane segment spans residues Val-15–Trp-35. The Cytoplasmic portion of the chain corresponds to Glu-36–Ser-48. A helical transmembrane segment spans residues Ala-49–Gly-69. The Periplasmic segment spans residues Ser-70 to Asn-98. A helical membrane pass occupies residues Phe-99 to Ala-119. The Cytoplasmic segment spans residues Ser-120–Gln-168. Residues Trp-169–Leu-189 form a helical membrane-spanning segment. Residues Gln-190–Pro-201 lie on the Periplasmic side of the membrane. The helical transmembrane segment at Phe-202–Ile-222 threads the bilayer. Topologically, residues Leu-223 to Ser-238 are cytoplasmic.

It belongs to the binding-protein-dependent transport system permease family. HisMQ subfamily. The complex is composed of two ATP-binding proteins (ArtP), two transmembrane proteins (ArtM and ArtQ) and two solute-binding proteins (ArtJ and ArtI).

It is found in the cell inner membrane. Part of the ABC transporter complex ArtPIQMJ involved in arginine transport. Probably responsible for the translocation of the substrate across the membrane. This Escherichia coli O6:H1 (strain CFT073 / ATCC 700928 / UPEC) protein is Arginine ABC transporter permease protein ArtQ (artQ).